The sequence spans 200 residues: Recombination protein RecR (200 aa).

The C4-type zinc finger occupies 57–72; sequence CRSCRTLTEEELCPQC. The 96-residue stretch at 80-175 folds into the Toprim domain; sequence TLLCVVEGPT…VASRIAHGVP (96 aa).

It belongs to the RecR family.

Functionally, may play a role in DNA repair. It seems to be involved in an RecBC-independent recombinational process of DNA repair. It may act with RecF and RecO. This Pseudomonas savastanoi pv. phaseolicola (strain 1448A / Race 6) (Pseudomonas syringae pv. phaseolicola (strain 1448A / Race 6)) protein is Recombination protein RecR.